The sequence spans 86 residues: Cell division topological specificity factor (86 aa).

It belongs to the MinE family.

In terms of biological role, prevents the cell division inhibition by proteins MinC and MinD at internal division sites while permitting inhibition at polar sites. This ensures cell division at the proper site by restricting the formation of a division septum at the midpoint of the long axis of the cell. The sequence is that of Cell division topological specificity factor from Rhizobium etli (strain ATCC 51251 / DSM 11541 / JCM 21823 / NBRC 15573 / CFN 42).